A 132-amino-acid chain; its full sequence is Interleukin-5 (132 aa).

Positions 1–19 (MHLRLTLVALGAAYVCANA) are cleaved as a signal peptide. Residues Asn74 and Asn88 are each glycosylated (N-linked (GlcNAc...) asparagine).

This sequence belongs to the IL-5 family. Homodimer; disulfide-linked. Interacts with IL5RA. Interacts with CSF2RB.

It localises to the secreted. Its function is as follows. Homodimeric cytokine expressed predominantly by T-lymphocytes and NK cells that plays an important role in the survival, differentiation, and chemotaxis of eosinophils. Also acts on activated and resting B-cells to induce immunoglobulin production, growth, and differentiation. Mechanistically, exerts its biological effects through a receptor composed of IL5RA subunit and the cytokine receptor common subunit beta/CSF2RB. Binding to the receptor leads to activation of various kinases including LYN, SYK and JAK2 and thereby propagates signals through the RAS-MAPK and JAK-STAT5 pathways respectively. The polypeptide is Interleukin-5 (IL5) (Ovis aries (Sheep)).